We begin with the raw amino-acid sequence, 191 residues long: Peptidyl-tRNA hydrolase (191 aa).

A tRNA-binding site is contributed by Tyr14. His19 functions as the Proton acceptor in the catalytic mechanism. The tRNA site is built by Tyr64, Asn66, and Asn112.

It belongs to the PTH family. As to quaternary structure, monomer.

Its subcellular location is the cytoplasm. It carries out the reaction an N-acyl-L-alpha-aminoacyl-tRNA + H2O = an N-acyl-L-amino acid + a tRNA + H(+). Functionally, hydrolyzes ribosome-free peptidyl-tRNAs (with 1 or more amino acids incorporated), which drop off the ribosome during protein synthesis, or as a result of ribosome stalling. Catalyzes the release of premature peptidyl moieties from peptidyl-tRNA molecules trapped in stalled 50S ribosomal subunits, and thus maintains levels of free tRNAs and 50S ribosomes. The polypeptide is Peptidyl-tRNA hydrolase (Clostridium botulinum (strain Alaska E43 / Type E3)).